The primary structure comprises 420 residues: Glutamyl-tRNA reductase (420 aa).

Residues 49-52 (TCNR), Ser-109, 114-116 (EPQ), and Gln-120 contribute to the substrate site. Cys-50 acts as the Nucleophile in catalysis. 189-194 (GAGETI) is an NADP(+) binding site.

It belongs to the glutamyl-tRNA reductase family. In terms of assembly, homodimer.

The enzyme catalyses (S)-4-amino-5-oxopentanoate + tRNA(Glu) + NADP(+) = L-glutamyl-tRNA(Glu) + NADPH + H(+). Its pathway is porphyrin-containing compound metabolism; protoporphyrin-IX biosynthesis; 5-aminolevulinate from L-glutamyl-tRNA(Glu): step 1/2. In terms of biological role, catalyzes the NADPH-dependent reduction of glutamyl-tRNA(Glu) to glutamate 1-semialdehyde (GSA). This Sodalis glossinidius (strain morsitans) protein is Glutamyl-tRNA reductase.